The chain runs to 284 residues: NAD kinase (284 aa).

The Proton acceptor role is filled by Asp61. NAD(+)-binding positions include 61–62 (DG), Arg66, 136–137 (ND), Arg147, Lys164, Asp166, and Leu201.

This sequence belongs to the NAD kinase family. A divalent metal cation serves as cofactor.

It is found in the cytoplasm. It catalyses the reaction NAD(+) + ATP = ADP + NADP(+) + H(+). Involved in the regulation of the intracellular balance of NAD and NADP, and is a key enzyme in the biosynthesis of NADP. Catalyzes specifically the phosphorylation on 2'-hydroxyl of the adenosine moiety of NAD to yield NADP. This Dehalococcoides mccartyi (strain ATCC BAA-2100 / JCM 16839 / KCTC 5957 / BAV1) protein is NAD kinase.